The primary structure comprises 475 residues: ATP synthase subunit beta (475 aa).

153 to 160 is a binding site for ATP; that stretch reads GGAGVGKT.

It belongs to the ATPase alpha/beta chains family. F-type ATPases have 2 components, CF(1) - the catalytic core - and CF(0) - the membrane proton channel. CF(1) has five subunits: alpha(3), beta(3), gamma(1), delta(1), epsilon(1). CF(0) has three main subunits: a(1), b(2) and c(9-12). The alpha and beta chains form an alternating ring which encloses part of the gamma chain. CF(1) is attached to CF(0) by a central stalk formed by the gamma and epsilon chains, while a peripheral stalk is formed by the delta and b chains.

The protein localises to the cell membrane. The catalysed reaction is ATP + H2O + 4 H(+)(in) = ADP + phosphate + 5 H(+)(out). In terms of biological role, produces ATP from ADP in the presence of a proton gradient across the membrane. The catalytic sites are hosted primarily by the beta subunits. The protein is ATP synthase subunit beta of Limosilactobacillus reuteri (strain DSM 20016) (Lactobacillus reuteri).